The chain runs to 241 residues: Putative integrase ORF241 (241 aa).

The Tyr recombinase domain occupies 82 to 241; it reads VEAKKTLVSA…AIEMLRKLAD (160 aa). Catalysis depends on residues Arg119, Lys144, His191, Arg194, and His217. The active-site O-(3'-phospho-DNA)-tyrosine intermediate is the Tyr226.

This sequence belongs to the 'phage' integrase family.

Its function is as follows. This protein may encode an integrase, which is necessary for integration of the viral DNA into host genome. This is Putative integrase ORF241 from Acidianus convivator (ATV).